Reading from the N-terminus, the 277-residue chain is Digeranylgeranylglyceryl phosphate synthase (277 aa).

Helical transmembrane passes span 16-36, 40-60, 93-113, 129-149, 153-173, 199-218, 222-244, and 253-273; these read ILAG…IPPV, ILIF…NDYF, FIGL…ALGA, FIGN…GAVG, IDLA…REIM, SGII…FLPV, IGLG…IDVL, and GQKI…LGAL.

This sequence belongs to the UbiA prenyltransferase family. DGGGP synthase subfamily. The cofactor is Mg(2+).

It is found in the cell membrane. It catalyses the reaction sn-3-O-(geranylgeranyl)glycerol 1-phosphate + (2E,6E,10E)-geranylgeranyl diphosphate = 2,3-bis-O-(geranylgeranyl)-sn-glycerol 1-phosphate + diphosphate. It participates in membrane lipid metabolism; glycerophospholipid metabolism. Its function is as follows. Prenyltransferase that catalyzes the transfer of the geranylgeranyl moiety of geranylgeranyl diphosphate (GGPP) to the C2 hydroxyl of (S)-3-O-geranylgeranylglyceryl phosphate (GGGP). This reaction is the second ether-bond-formation step in the biosynthesis of archaeal membrane lipids. The protein is Digeranylgeranylglyceryl phosphate synthase of Pyrococcus horikoshii (strain ATCC 700860 / DSM 12428 / JCM 9974 / NBRC 100139 / OT-3).